The primary structure comprises 259 residues: 5'-nucleotidase SurE (259 aa).

A divalent metal cation contacts are provided by Asp8, Asp9, Ser40, and Asn92.

It belongs to the SurE nucleotidase family. A divalent metal cation is required as a cofactor.

Its subcellular location is the cytoplasm. It catalyses the reaction a ribonucleoside 5'-phosphate + H2O = a ribonucleoside + phosphate. Nucleotidase that shows phosphatase activity on nucleoside 5'-monophosphates. The sequence is that of 5'-nucleotidase SurE from Stenotrophomonas maltophilia (strain R551-3).